Reading from the N-terminus, the 492-residue chain is UDP-N-acetylmuramoyl-L-alanyl-D-glutamate--2,6-diaminopimelate ligase (492 aa).

Residue serine 30 participates in UDP-N-acetyl-alpha-D-muramoyl-L-alanyl-D-glutamate binding. ATP is bound at residue 114–120; sequence GTNGKTS. UDP-N-acetyl-alpha-D-muramoyl-L-alanyl-D-glutamate contacts are provided by residues 156-157, serine 183, glutamine 189, and arginine 191; that span reads TT. N6-carboxylysine is present on lysine 223. Residues arginine 389, 413–416, glycine 462, and glutamate 466 each bind meso-2,6-diaminopimelate; that span reads DNPR. The Meso-diaminopimelate recognition motif motif lies at 413-416; that stretch reads DNPR.

The protein belongs to the MurCDEF family. MurE subfamily. Mg(2+) serves as cofactor. In terms of processing, carboxylation is probably crucial for Mg(2+) binding and, consequently, for the gamma-phosphate positioning of ATP.

It is found in the cytoplasm. It carries out the reaction UDP-N-acetyl-alpha-D-muramoyl-L-alanyl-D-glutamate + meso-2,6-diaminopimelate + ATP = UDP-N-acetyl-alpha-D-muramoyl-L-alanyl-gamma-D-glutamyl-meso-2,6-diaminopimelate + ADP + phosphate + H(+). It functions in the pathway cell wall biogenesis; peptidoglycan biosynthesis. Catalyzes the addition of meso-diaminopimelic acid to the nucleotide precursor UDP-N-acetylmuramoyl-L-alanyl-D-glutamate (UMAG) in the biosynthesis of bacterial cell-wall peptidoglycan. The protein is UDP-N-acetylmuramoyl-L-alanyl-D-glutamate--2,6-diaminopimelate ligase of Neisseria meningitidis serogroup B (strain ATCC BAA-335 / MC58).